Reading from the N-terminus, the 238-residue chain is Probable septum site-determining protein MinC (238 aa).

Belongs to the MinC family. In terms of assembly, interacts with MinD and FtsZ.

Functionally, cell division inhibitor that blocks the formation of polar Z ring septums. Rapidly oscillates between the poles of the cell to destabilize FtsZ filaments that have formed before they mature into polar Z rings. Prevents FtsZ polymerization. This chain is Probable septum site-determining protein MinC, found in Xylella fastidiosa (strain M12).